The sequence spans 300 residues: Small ribosomal subunit protein uS2 (300 aa).

The interval 278–300 (GEAQTGNEGWGTEAAAPAATTQW) is disordered.

It belongs to the universal ribosomal protein uS2 family. As to quaternary structure, component of the small ribosomal subunit. Mature ribosomes consist of a small (40S) and a large (60S) subunit. The 40S subunit contains about 33 different proteins and 1 molecule of RNA (18S). The 60S subunit contains about 49 different proteins and 3 molecules of RNA (25S, 5.8S and 5S). Interacts with rps21.

It localises to the cytoplasm. In terms of biological role, required for the assembly and/or stability of the 40S ribosomal subunit. Required for the processing of the 20S rRNA-precursor to mature 18S rRNA in a late step of the maturation of 40S ribosomal subunits. This chain is Small ribosomal subunit protein uS2 (rps0), found in Pyrenophora tritici-repentis (strain Pt-1C-BFP) (Wheat tan spot fungus).